A 313-amino-acid chain; its full sequence is Olfactory receptor 4M1 (313 aa).

Residues 1–25 (METANYTKVTEFVLTGLSQTREVQL) are Extracellular-facing. Asparagine 5 is a glycosylation site (N-linked (GlcNAc...) asparagine). A helical membrane pass occupies residues 26-49 (VLFVIFLSFYLFILPGNILIICTI). Topologically, residues 50-57 (RLDPHLTS) are cytoplasmic. A helical transmembrane segment spans residues 58-79 (PMYFLLANLALLDIWYSSITAP). At 80-100 (KMLIDFFVERKIISFGGCIAQ) the chain is on the extracellular side. An intrachain disulfide couples cysteine 97 to cysteine 189. Residues 101-120 (LFFLHFVGASEMFLLTVMAY) form a helical membrane-spanning segment. The Cytoplasmic portion of the chain corresponds to 121–139 (DRYAAICRPLHYATIMNRR). The chain crosses the membrane as a helical span at residues 140-158 (LCCILVALSWMGGFIHSII). Residues 159–195 (QVALIVRLPFCGPNELDSYFCDITQVVRIACANTFPE) lie on the Extracellular side of the membrane. The helical transmembrane segment at 196-219 (ELVMICSSGLISVVCFIALLMSYA) threads the bilayer. Topologically, residues 220–237 (FLLALLKKHSGSGENTNR) are cytoplasmic. A helical membrane pass occupies residues 238-260 (AMSTCYSHITIVVLMFGPSIYIY). At 261-271 (ARPFDSFSLDK) the chain is on the extracellular side. A helical transmembrane segment spans residues 272–291 (VVSVFHTVIFPLLNPIIYTL). Residues 292-313 (RNKEVKAAMRKVVTKYILCEEK) are Cytoplasmic-facing.

This sequence belongs to the G-protein coupled receptor 1 family. In terms of tissue distribution, highly expressed in the testis and olfactory bulb.

The protein localises to the cell membrane. Olfactory receptor that acts as a receptor of Asprosin hormone, potentially at the surface of hepatocytes and may help to promote hepatocyte glucose release. In Homo sapiens (Human), this protein is Olfactory receptor 4M1.